The following is a 289-amino-acid chain: Thiosulfate sulfurtransferase (289 aa).

The 119-residue stretch at 24-142 (VGAGLRVLDA…WVKEGHPVTA (119 aa)) folds into the Rhodanese 1 domain. The segment at 143–158 (EPSQPAEAVFKAKLDK) is hinge. The Rhodanese 2 domain maps to 172–284 (GSKKFQVVDS…WFHRAPPQYK (113 aa)). Arginine 186 serves as a coordination point for substrate. The active-site Cysteine persulfide intermediate is the cysteine 244. A substrate-binding site is contributed by lysine 246.

In terms of assembly, monomer. Expressed in numerous tissues.

Its subcellular location is the mitochondrion matrix. It catalyses the reaction thiosulfate + hydrogen cyanide = thiocyanate + sulfite + 2 H(+). Its function is as follows. Together with MRPL18, acts as a mitochondrial import factor for the cytosolic 5S rRNA. Only the nascent unfolded cytoplasmic form is able to bind to the 5S rRNA. Formation of iron-sulfur complexes and cyanide detoxification. This chain is Thiosulfate sulfurtransferase (TST), found in Gallus gallus (Chicken).